Here is a 788-residue protein sequence, read N- to C-terminus: Multi-functional prenyltransferase ltmE (788 aa).

The substrate site is built by Lys18 and His51. Asp58 serves as a coordination point for Mg(2+). Residues Arg67, Lys151, Thr152, Gln182, Asn189, and Lys199 each contribute to the substrate site. The segment at 283-337 is disordered; sequence DTLDGDDLTRPSTITQHEQDDHVDRAAIDAKSDASGSSNKSLTPPETAPTTDTLS. Basic and acidic residues predominate over residues 299–314; the sequence is HEQDDHVDRAAIDAKS. Positions 316–337 are enriched in polar residues; sequence ASGSSNKSLTPPETAPTTDTLS. Residue 404 to 405 coordinates L-tryptophan; sequence MA. The substrate site is built by Arg427, Arg599, Lys601, Tyr603, and Tyr687.

The protein in the N-terminal section; belongs to the FPP/GGPP synthase family. This sequence in the C-terminal section; belongs to the tryptophan dimethylallyltransferase family. The cofactor is Mg(2+).

It functions in the pathway secondary metabolite biosynthesis. Its function is as follows. Multi-functional prenyltransferase; part of the gene cluster that mediates the biosynthesis of lolitrems, indole-diterpene mycotoxins that are potent tremorgens in mammals, and are synthesized by clavicipitaceous fungal endophytes in association with their grass hosts. The geranylgeranyl diphosphate (GGPP) synthase ltmG is proposed to catalyze the first step in lolitrem biosynthesis. LtmG catalyzes a series of iterative condensations of isopentenyl diphosphate (IPP) with dimethylallyl diphosphate (DMAPP), geranyl diphosphate (GPP), and farnesyl diphosphate (FPP), to form GGPP. GGPP then condenses with indole-3-glycerol phosphate to form 3-geranylgeranylindole, an acyclic intermediate, to be incorporated into paxilline. Either ltmG or ltmC could be responsible for this step, as both are putative prenyl transferases. The FAD-dependent monooxygenase ltmM then catalyzes the epoxidation of the two terminal alkenes of the geranylgeranyl moiety, which is subsequently cyclized by ltmB, to paspaline. The cytochrome P450 monooxygenases ltmQ and ltmP can sequentially oxidize paspaline to terpendole E and terpendole F. Alternatively, ltmP converts paspaline to an intermediate which is oxidized by ltmQ to terpendole F. LtmF, ltmK, ltmE and ltmJ appear to be unique to the epichloe endophytes. The prenyltransferase ltmF is involved in the 27-hydroxyl-O-prenylation. The cytochrome P450 monooxygenase ltmK is required for the oxidative acetal ring formation. The multi-functional prenyltransferase ltmE is required for C20- and C21-prenylations of the indole ring of paspalanes and acts together with the cytochrome P450 monooxygenase ltmJ to yield lolitremanes by multiple oxidations and ring closures. The stereoisomer pairs of lolitriol and lolitrem N or lolitrem B and lolitrem F may be attributed to variations in the way in which ring closure can occur under the action of ltmJ. While the major product of this pathway is lolitrem B, the prenyl transferases and cytochrome P450 monooxygenases identified in this pathway have a remarkable versatility in their regio- and stereo-specificities to generate a diverse range of metabolites that are products of a metabolic grid rather than a linear pathway. The polypeptide is Multi-functional prenyltransferase ltmE (Epichloe festucae var. lolii (Neotyphodium lolii)).